The chain runs to 114 residues: NAD(P)H-quinone oxidoreductase subunit M (114 aa).

It belongs to the complex I NdhM subunit family. NDH-1 can be composed of about 15 different subunits; different subcomplexes with different compositions have been identified which probably have different functions.

It is found in the cellular thylakoid membrane. The catalysed reaction is a plastoquinone + NADH + (n+1) H(+)(in) = a plastoquinol + NAD(+) + n H(+)(out). It carries out the reaction a plastoquinone + NADPH + (n+1) H(+)(in) = a plastoquinol + NADP(+) + n H(+)(out). NDH-1 shuttles electrons from an unknown electron donor, via FMN and iron-sulfur (Fe-S) centers, to quinones in the respiratory and/or the photosynthetic chain. The immediate electron acceptor for the enzyme in this species is believed to be plastoquinone. Couples the redox reaction to proton translocation, and thus conserves the redox energy in a proton gradient. Cyanobacterial NDH-1 also plays a role in inorganic carbon-concentration. The chain is NAD(P)H-quinone oxidoreductase subunit M from Acaryochloris marina (strain MBIC 11017).